We begin with the raw amino-acid sequence, 807 residues long: uncharacterized protein (807 aa).

An N-terminal signal peptide occupies residues 1–18 (MNTVLFVILLAAIGSNHG). The Extracellular segment spans residues 19–704 (LIDERLTVNR…GLFTDIFGGE (686 aa)). A compositionally biased stretch (polar residues) spans 133–142 (TTTTAAPQTG). A disordered region spans residues 133-171 (TTTTAAPQTGNRRRRRAAGDEPNTDDNTPPNLEIPDWLD). Residues N277 and N660 are each glycosylated (N-linked (GlcNAc...) asparagine; by host). A helical transmembrane segment spans residues 705 to 725 (VWAVIAAIFSPVFLTAFALII). Residues 726-807 (SLINFIPAVR…GERQVISRTN (82 aa)) are Cytoplasmic-facing.

It is found in the host membrane. This is an uncharacterized protein from Magallana gigas (Pacific oyster).